The sequence spans 855 residues: Coiled-coil domain-containing protein 87 (855 aa).

2 disordered regions span residues 23-43 (LFPSKAKPPPEPPKRPSQDAT) and 278-302 (SRPSPMVPLPSHSPSSESHQFPTSP). Residues 287 to 296 (PSHSPSSESH) show a composition bias toward low complexity. Coiled-coil stretches lie at residues 387–413 (TRRLTAQHHLEKLQQMIKSLQEEEASG) and 764–789 (RSYLQRKLNRMESNLVSLLERIESVF).

This sequence belongs to the CCDC87 family. Specifically expressed in testis (at protein level). Not detected in other tissues tested (at protein level). In the testis, localizes to pachytene spermatocytes and spermatids.

Functionally, plays a role in spermatogenesis, where it is important for normal sperm head morphology. Also required for the acrosome reaction and thus normal male fertility. In Mus musculus (Mouse), this protein is Coiled-coil domain-containing protein 87 (Ccdc87).